The primary structure comprises 710 residues: Polyribonucleotide nucleotidyltransferase (710 aa).

Residues Asp489 and Asp495 each contribute to the Mg(2+) site. In terms of domain architecture, KH spans 556-615; sequence PKIDTIKIDVDKIKVVIGKGGETIDKIIAETGVKIDIDDEGNVSIYSSDQAAIDRTKEII. An S1 motif domain is found at 625–693; it reads GEVYHAKVIR…EKGRVDASMK (69 aa). The segment at 691–710 is disordered; sequence SMKALIPRPPKPEKKEEKHD. Basic and acidic residues predominate over residues 700–710; the sequence is PKPEKKEEKHD.

The protein belongs to the polyribonucleotide nucleotidyltransferase family. Mg(2+) serves as cofactor.

The protein resides in the cytoplasm. The catalysed reaction is RNA(n+1) + phosphate = RNA(n) + a ribonucleoside 5'-diphosphate. In terms of biological role, involved in mRNA degradation. Catalyzes the phosphorolysis of single-stranded polyribonucleotides processively in the 3'- to 5'-direction. This Streptococcus pyogenes serotype M18 (strain MGAS8232) protein is Polyribonucleotide nucleotidyltransferase.